The chain runs to 39 residues: MTLDRTYPIFTVRWLAIHGLAVPTVFFLGSISAMQFIQR.

The helical transmembrane segment at 14–30 (WLAIHGLAVPTVFFLGS) threads the bilayer. H18 lines the heme pocket.

The protein belongs to the PsbE/PsbF family. In terms of assembly, heterodimer of an alpha subunit and a beta subunit. PSII is composed of 1 copy each of membrane proteins PsbA, PsbB, PsbC, PsbD, PsbE, PsbF, PsbH, PsbI, PsbJ, PsbK, PsbL, PsbM, PsbT, PsbX, PsbY, PsbZ, Psb30/Ycf12, at least 3 peripheral proteins of the oxygen-evolving complex and a large number of cofactors. It forms dimeric complexes. Heme b serves as cofactor.

It localises to the plastid. Its subcellular location is the chloroplast thylakoid membrane. This b-type cytochrome is tightly associated with the reaction center of photosystem II (PSII). PSII is a light-driven water:plastoquinone oxidoreductase that uses light energy to abstract electrons from H(2)O, generating O(2) and a proton gradient subsequently used for ATP formation. It consists of a core antenna complex that captures photons, and an electron transfer chain that converts photonic excitation into a charge separation. This chain is Cytochrome b559 subunit beta, found in Psilotum nudum (Whisk fern).